Reading from the N-terminus, the 425-residue chain is MEVKELERDKNRVVLEYVFNREEVLEAEDKAARYLNQRVEIPGFRKGRVPKNILKMRLGEDFQEYTLDFLMDLIPDTLKDRNLIMSPVVTEREIKEDTARFVVEVHEEPEVKIGDVSKIEVEKVDEEKVLEKYVERRLEDLREKHALLEPKEGPAEVGDLVRISMEVYNEEGKNLTTREYEYVIKEGEDRPFVKDLIGKKKDDVVEIEREYEGKKYTYRLKVQEVYRRTLPEIGDELARTVNNEFETLEQLKEELKKEGKDIYDVEMKESMREQLLEKLPEVVEIEISERTLDLLVQETINRLKREGRYDQIVSSYESEEKLKEELKKRILDDIKRDRAIEVIAKERNVDVSDEELEKEAEELAPFWGISPERAKSLVKSRRDLREDLRWAILKRKVLDLLLEEVTVKVVEPRGEGDGDERKGDN.

The PPIase FKBP-type domain maps to 158 to 231 (GDLVRISMEV…VQEVYRRTLP (74 aa)).

Belongs to the FKBP-type PPIase family. Tig subfamily.

Its subcellular location is the cytoplasm. The catalysed reaction is [protein]-peptidylproline (omega=180) = [protein]-peptidylproline (omega=0). In terms of biological role, involved in protein export. Acts as a chaperone by maintaining the newly synthesized protein in an open conformation. Functions as a peptidyl-prolyl cis-trans isomerase. In Thermotoga neapolitana (strain ATCC 49049 / DSM 4359 / NBRC 107923 / NS-E), this protein is Trigger factor.